A 444-amino-acid chain; its full sequence is ATP-dependent protease ATPase subunit HslU (444 aa).

Residues isoleucine 20 and 62 to 67 each bind ATP; that span reads GVGKTE. The tract at residues 130-158 is disordered; it reads EDRILDALVPPPRGASGEPERGEDNSARQ. Residues aspartate 257, glutamate 322, and arginine 394 each coordinate ATP.

It belongs to the ClpX chaperone family. HslU subfamily. A double ring-shaped homohexamer of HslV is capped on each side by a ring-shaped HslU homohexamer. The assembly of the HslU/HslV complex is dependent on binding of ATP.

The protein localises to the cytoplasm. ATPase subunit of a proteasome-like degradation complex; this subunit has chaperone activity. The binding of ATP and its subsequent hydrolysis by HslU are essential for unfolding of protein substrates subsequently hydrolyzed by HslV. HslU recognizes the N-terminal part of its protein substrates and unfolds these before they are guided to HslV for hydrolysis. The polypeptide is ATP-dependent protease ATPase subunit HslU (Bordetella bronchiseptica (strain ATCC BAA-588 / NCTC 13252 / RB50) (Alcaligenes bronchisepticus)).